Reading from the N-terminus, the 409-residue chain is Serine/threonine transporter SstT (409 aa).

9 consecutive transmembrane segments (helical) span residues 15–35 (LSLV…ALLA), 49–69 (FVSA…MASI), 82–102 (PILV…VIAS), 142–162 (ALMN…GVAI), 193–213 (LGIF…ALLG), 218–238 (LAVL…LIVF), 301–321 (GAAI…GIAV), 331–351 (VVAA…LLLI), and 357–377 (LFGI…IIGV).

Belongs to the dicarboxylate/amino acid:cation symporter (DAACS) (TC 2.A.23) family.

The protein resides in the cell inner membrane. It carries out the reaction L-serine(in) + Na(+)(in) = L-serine(out) + Na(+)(out). It catalyses the reaction L-threonine(in) + Na(+)(in) = L-threonine(out) + Na(+)(out). In terms of biological role, involved in the import of serine and threonine into the cell, with the concomitant import of sodium (symport system). The chain is Serine/threonine transporter SstT from Pseudomonas fluorescens (strain ATCC BAA-477 / NRRL B-23932 / Pf-5).